The sequence spans 36 residues: Cytochrome b6-f complex subunit 7 (36 aa).

The chain crosses the membrane as a helical span at residues 9 to 29 (NGAFIMIGLTLLGLAWGFVII).

This sequence belongs to the PetM family. The 4 large subunits of the cytochrome b6-f complex are cytochrome b6, subunit IV (17 kDa polypeptide, PetD), cytochrome f and the Rieske protein, while the 4 small subunits are PetG, PetL, PetM and PetN. The complex functions as a dimer.

The protein localises to the cellular thylakoid membrane. In terms of biological role, component of the cytochrome b6-f complex, which mediates electron transfer between photosystem II (PSII) and photosystem I (PSI), cyclic electron flow around PSI, and state transitions. The chain is Cytochrome b6-f complex subunit 7 from Synechocystis sp. (strain ATCC 27184 / PCC 6803 / Kazusa).